Reading from the N-terminus, the 168-residue chain is Large ribosomal subunit protein uL16 (168 aa).

This sequence belongs to the universal ribosomal protein uL16 family.

The sequence is that of Large ribosomal subunit protein uL16 from Thermofilum pendens (strain DSM 2475 / Hrk 5).